The primary structure comprises 232 residues: MSATKMNAQEIIKFIADAKKKTPVKVTFDGELHGSIPWSVVKLGNVLFGDWEEIKPLLANLEENKTYVVEQDARNSAVPLLDKRDINARIEPGAIIRDQVEIGDNAVIMMGAVINIGAEIGAGTMIDMGAILGGRAIVGKNSHVGAGAVLAGVIEPASAEPVRVGDNVLIGANAVVIEGVQIGSGSVVAAGAIVTQDVPENVVVAGVPARVIKTIDEKTQQKTALEDALRTL.

This sequence belongs to the transferase hexapeptide repeat family. DapH subfamily.

It carries out the reaction (S)-2,3,4,5-tetrahydrodipicolinate + acetyl-CoA + H2O = L-2-acetamido-6-oxoheptanedioate + CoA. Its pathway is amino-acid biosynthesis; L-lysine biosynthesis via DAP pathway; LL-2,6-diaminopimelate from (S)-tetrahydrodipicolinate (acetylase route): step 1/3. Catalyzes the transfer of an acetyl group from acetyl-CoA to tetrahydrodipicolinate. This chain is 2,3,4,5-tetrahydropyridine-2,6-dicarboxylate N-acetyltransferase, found in Streptococcus sanguinis (strain SK36).